The following is a 233-amino-acid chain: Phosphoribosylformylglycinamidine synthase subunit PurQ (233 aa).

A Glutamine amidotransferase type-1 domain is found at 3–233 (SAVLVFPGIN…GLVEHLKTAA (231 aa)). The active-site Nucleophile is the C87. Active-site residues include H204 and E206.

Part of the FGAM synthase complex composed of 1 PurL, 1 PurQ and 2 PurS subunits.

Its subcellular location is the cytoplasm. The catalysed reaction is N(2)-formyl-N(1)-(5-phospho-beta-D-ribosyl)glycinamide + L-glutamine + ATP + H2O = 2-formamido-N(1)-(5-O-phospho-beta-D-ribosyl)acetamidine + L-glutamate + ADP + phosphate + H(+). The enzyme catalyses L-glutamine + H2O = L-glutamate + NH4(+). It functions in the pathway purine metabolism; IMP biosynthesis via de novo pathway; 5-amino-1-(5-phospho-D-ribosyl)imidazole from N(2)-formyl-N(1)-(5-phospho-D-ribosyl)glycinamide: step 1/2. Part of the phosphoribosylformylglycinamidine synthase complex involved in the purines biosynthetic pathway. Catalyzes the ATP-dependent conversion of formylglycinamide ribonucleotide (FGAR) and glutamine to yield formylglycinamidine ribonucleotide (FGAM) and glutamate. The FGAM synthase complex is composed of three subunits. PurQ produces an ammonia molecule by converting glutamine to glutamate. PurL transfers the ammonia molecule to FGAR to form FGAM in an ATP-dependent manner. PurS interacts with PurQ and PurL and is thought to assist in the transfer of the ammonia molecule from PurQ to PurL. The protein is Phosphoribosylformylglycinamidine synthase subunit PurQ of Rhodopseudomonas palustris (strain HaA2).